The primary structure comprises 274 residues: Rhamnulose-1-phosphate aldolase (274 aa).

Residue Glu117 is part of the active site. His141, His143, and His212 together coordinate Zn(2+).

It belongs to the aldolase class II family. RhaD subfamily. Homotetramer. It depends on Zn(2+) as a cofactor.

The protein localises to the cytoplasm. The catalysed reaction is L-rhamnulose 1-phosphate = (S)-lactaldehyde + dihydroxyacetone phosphate. It participates in carbohydrate degradation; L-rhamnose degradation; glycerone phosphate from L-rhamnose: step 3/3. Catalyzes the reversible cleavage of L-rhamnulose-1-phosphate to dihydroxyacetone phosphate (DHAP) and L-lactaldehyde. The protein is Rhamnulose-1-phosphate aldolase of Yersinia pseudotuberculosis serotype IB (strain PB1/+).